Reading from the N-terminus, the 134-residue chain is uncharacterized protein (134 aa).

This is an uncharacterized protein from Streptomyces coelicolor (strain ATCC BAA-471 / A3(2) / M145).